The sequence spans 91 residues: Small ribosomal subunit protein uS15 (91 aa).

This sequence belongs to the universal ribosomal protein uS15 family. As to quaternary structure, part of the 30S ribosomal subunit. Forms a bridge to the 50S subunit in the 70S ribosome, contacting the 23S rRNA.

Its function is as follows. One of the primary rRNA binding proteins, it binds directly to 16S rRNA where it helps nucleate assembly of the platform of the 30S subunit by binding and bridging several RNA helices of the 16S rRNA. Functionally, forms an intersubunit bridge (bridge B4) with the 23S rRNA of the 50S subunit in the ribosome. This Legionella pneumophila (strain Corby) protein is Small ribosomal subunit protein uS15.